The sequence spans 100 residues: Small ribosomal subunit protein uS14c (100 aa).

It belongs to the universal ribosomal protein uS14 family. As to quaternary structure, part of the 30S ribosomal subunit.

The protein resides in the plastid. It is found in the chloroplast. Its function is as follows. Binds 16S rRNA, required for the assembly of 30S particles. The protein is Small ribosomal subunit protein uS14c of Phalaenopsis aphrodite subsp. formosana (Moth orchid).